A 122-amino-acid polypeptide reads, in one-letter code: MKRRLIYSNGLHGLPTEIIACTEVQEKRYERTGEVAFALASLSWSDGIVEELGAIVLDSWKKCGVNAAKLPSGMLLSQNERVTSRVTNSRTESESNGNGNATGNTSSNANSNGNANGIYIRK.

The segment covering 79–90 (NERVTSRVTNSR) has biased composition (polar residues). The disordered stretch occupies residues 79 to 122 (NERVTSRVTNSRTESESNGNGNATGNTSSNANSNGNANGIYIRK). Residues 94–122 (ESNGNGNATGNTSSNANSNGNANGIYIRK) show a composition bias toward low complexity.

This is an uncharacterized protein from Leptolyngbya boryana (Plectonema boryanum).